A 413-amino-acid chain; its full sequence is Glucose-1-phosphate adenylyltransferase (413 aa).

Alpha-D-glucose 1-phosphate-binding positions include Gly169, 184–185, and Ser201; that span reads EK.

This sequence belongs to the bacterial/plant glucose-1-phosphate adenylyltransferase family. Homotetramer.

It carries out the reaction alpha-D-glucose 1-phosphate + ATP + H(+) = ADP-alpha-D-glucose + diphosphate. It participates in glycan biosynthesis; glycogen biosynthesis. Functionally, involved in the biosynthesis of ADP-glucose, a building block required for the elongation reactions to produce glycogen. Catalyzes the reaction between ATP and alpha-D-glucose 1-phosphate (G1P) to produce pyrophosphate and ADP-Glc. The polypeptide is Glucose-1-phosphate adenylyltransferase (Trichlorobacter lovleyi (strain ATCC BAA-1151 / DSM 17278 / SZ) (Geobacter lovleyi)).